The primary structure comprises 310 residues: UPF0761 membrane protein VFMJ11_0098 (310 aa).

6 helical membrane passes run 34 to 54, 97 to 117, 136 to 156, 178 to 198, 207 to 227, and 242 to 262; these read YMAY…LSVL, MTAV…SSID, FSLY…SLAA, LLGW…YLLV, HALI…VGFA, and ALAA…IVLI.

Belongs to the UPF0761 family.

It is found in the cell inner membrane. This chain is UPF0761 membrane protein VFMJ11_0098, found in Aliivibrio fischeri (strain MJ11) (Vibrio fischeri).